We begin with the raw amino-acid sequence, 292 residues long: Bifunctional protein FolD (292 aa).

NADP(+) contacts are provided by residues Gly-161–Ser-163 and Ile-231.

The protein belongs to the tetrahydrofolate dehydrogenase/cyclohydrolase family. As to quaternary structure, homodimer.

The enzyme catalyses (6R)-5,10-methylene-5,6,7,8-tetrahydrofolate + NADP(+) = (6R)-5,10-methenyltetrahydrofolate + NADPH. It catalyses the reaction (6R)-5,10-methenyltetrahydrofolate + H2O = (6R)-10-formyltetrahydrofolate + H(+). Its pathway is one-carbon metabolism; tetrahydrofolate interconversion. Catalyzes the oxidation of 5,10-methylenetetrahydrofolate to 5,10-methenyltetrahydrofolate and then the hydrolysis of 5,10-methenyltetrahydrofolate to 10-formyltetrahydrofolate. The polypeptide is Bifunctional protein FolD (Protochlamydia amoebophila (strain UWE25)).